Reading from the N-terminus, the 113-residue chain is Ranasmurfin (113 aa).

Y2 bears the 2',4',5'-topaquinone mark. The lysine tyrosylquinone (Tyr-Lys) cross-link spans 2–31 (YACSFPPSEIPGSKECLAEALQKHQGFKKK). 3 disulfide bridges follow: C4-C62, C17-C65, and C37-C101. S9 is modified (aminomalonic acid (Ser); in chain B). Residues 17-65 (CLAEALQKHQGFKKKSYALICAYLNYKEDAENYERAAEDFDSAVKCTGC) constitute a cross-link (S-cysteinyl 3-(oxidosulfanyl)alanine (Cys-Cys); in chain B). The segment at residues 30-108 (KKSYALICAY…SLCTLFQKLY (79 aa)) is a cross-link (lysine tyrosylquinone (Lys-Tyr)). Position 65 is a cysteine sulfenic acid (-SOH); in chain B (C65). Y108 carries the 2',4',5'-topaquinone modification. Zn(2+)-binding residues include Y108 and H112. Residue Y108 forms a 5'-tyrosyl-5'-aminotyrosine (Tyr-Tyr) (interchain with Y-108) linkage.

Homodimer. The two chains, designated A and B, differ in their modifications, but not, it is thought, in their sequence. It depends on Zn(2+) as a cofactor. As to expression, foam nest.

The protein localises to the secreted. The polypeptide is Ranasmurfin (Polypedates leucomystax (Common tree frog)).